A 237-amino-acid polypeptide reads, in one-letter code: Uridylate kinase (237 aa).

9-12 (KLSG) contributes to the ATP binding site. The segment at 17 to 22 (GTQGYG) is involved in allosteric activation by GTP. Glycine 51 is a UMP binding site. Positions 52 and 56 each coordinate ATP. UMP contacts are provided by residues aspartate 71 and 132-139 (CGNPFFTT). ATP-binding residues include threonine 159, tyrosine 165, and aspartate 168.

This sequence belongs to the UMP kinase family. As to quaternary structure, homohexamer.

The protein localises to the cytoplasm. The catalysed reaction is UMP + ATP = UDP + ADP. Its pathway is pyrimidine metabolism; CTP biosynthesis via de novo pathway; UDP from UMP (UMPK route): step 1/1. Allosterically activated by GTP. Inhibited by UTP. Functionally, catalyzes the reversible phosphorylation of UMP to UDP. In Parasynechococcus marenigrum (strain WH8102), this protein is Uridylate kinase.